Consider the following 92-residue polypeptide: Long neurotoxin 2 (92 aa).

The signal sequence occupies residues 1-21 (MKTLLLTLVVVTIVCLDLGYT). 5 disulfide bridges follow: Cys24-Cys42, Cys35-Cys63, Cys48-Cys52, Cys67-Cys79, and Cys80-Cys85.

Belongs to the three-finger toxin family. Long-chain subfamily. Type II alpha-neurotoxin sub-subfamily. Expressed by the venom gland.

Its subcellular location is the secreted. Binds with high affinity to muscular (alpha-1/CHRNA1) and neuronal (alpha-7/CHRNA7) nicotinic acetylcholine receptor (nAChR) and inhibits acetylcholine from binding to the receptor, thereby impairing neuromuscular and neuronal transmission. The chain is Long neurotoxin 2 from Oxyuranus microlepidotus (Inland taipan).